Consider the following 835-residue polypeptide: Leucine--tRNA ligase (835 aa).

The 'HIGH' region signature appears at 44–54 (PYPSGNIHMGH). Positions 587–591 (KMSKS) match the 'KMSKS' region motif. Residue lysine 590 coordinates ATP.

The protein belongs to the class-I aminoacyl-tRNA synthetase family.

It is found in the cytoplasm. It catalyses the reaction tRNA(Leu) + L-leucine + ATP = L-leucyl-tRNA(Leu) + AMP + diphosphate. This chain is Leucine--tRNA ligase, found in Lawsonia intracellularis (strain PHE/MN1-00).